Here is a 558-residue protein sequence, read N- to C-terminus: Thermosome subunit alpha (558 aa).

The disordered stretch occupies residues 536-558 (TEKGKKEGGEGAGAETPGAPSLE). The segment covering 548–558 (GAETPGAPSLE) has biased composition (low complexity).

Belongs to the TCP-1 chaperonin family. As to quaternary structure, forms a Heterooligomeric complex of two stacked eight-membered rings.

Molecular chaperone; binds unfolded polypeptides in vitro, and has a weak ATPase activity. The sequence is that of Thermosome subunit alpha (thsA) from Sulfolobus acidocaldarius (strain ATCC 33909 / DSM 639 / JCM 8929 / NBRC 15157 / NCIMB 11770).